Consider the following 112-residue polypeptide: DNA-binding protein TGAM_1196 (112 aa).

The protein belongs to the PDCD5 family.

The protein is DNA-binding protein TGAM_1196 of Thermococcus gammatolerans (strain DSM 15229 / JCM 11827 / EJ3).